We begin with the raw amino-acid sequence, 156 residues long: MKGKRIAIVSHRILNQNSVVNGLERAEGAFNEVVEILLKNNYGIIQLPCPELIYLGIDREGKTKEEYDTKEYRELCKKLLEPIIKYLQEYKKDNYKFILIGIENSTTCDIFKNRGILMEEFFKEVEKLNIIIKAIEYPKNEKDYNKFVKTLEKMIK.

This is an uncharacterized protein from Methanocaldococcus jannaschii (strain ATCC 43067 / DSM 2661 / JAL-1 / JCM 10045 / NBRC 100440) (Methanococcus jannaschii).